Consider the following 284-residue polypeptide: Tropomyosin (284 aa).

Positions 1 to 284 form a coiled coil; the sequence is MDGIKKKMIA…DQTFAELTGY (284 aa). Residues 111 to 131 form a disordered region; the sequence is TKLEEASKTAEESERGRKDLE.

It belongs to the tropomyosin family. In terms of assembly, homodimer.

Functionally, tropomyosin, in association with the troponin complex, plays a central role in the calcium dependent regulation of muscle contraction. In Schistosoma japonicum (Blood fluke), this protein is Tropomyosin.